A 267-amino-acid polypeptide reads, in one-letter code: Hydroxyacylglutathione hydrolase (267 aa).

H55, H57, D59, H60, H121, D138, and H176 together coordinate Zn(2+).

It belongs to the metallo-beta-lactamase superfamily. Glyoxalase II family. In terms of assembly, monomer. It depends on Zn(2+) as a cofactor.

The enzyme catalyses an S-(2-hydroxyacyl)glutathione + H2O = a 2-hydroxy carboxylate + glutathione + H(+). Its pathway is secondary metabolite metabolism; methylglyoxal degradation; (R)-lactate from methylglyoxal: step 2/2. Thiolesterase that catalyzes the hydrolysis of S-D-lactoyl-glutathione to form glutathione and D-lactic acid. The polypeptide is Hydroxyacylglutathione hydrolase (Shewanella sp. (strain ANA-3)).